Reading from the N-terminus, the 422-residue chain is 5'-deoxyadenosine deaminase (422 aa).

Residues His57 and His59 each coordinate Zn(2+). Residues Glu86 and His178 each contribute to the substrate site. Residue His205 participates in Zn(2+) binding. Glu208 and Asp294 together coordinate substrate. Residue Asp294 participates in Zn(2+) binding.

The protein belongs to the metallo-dependent hydrolases superfamily. MTA/SAH deaminase family. In terms of assembly, homotetramer. The cofactor is Zn(2+).

It catalyses the reaction 5'-deoxyadenosine + H2O + H(+) = 5'-deoxyinosine + NH4(+). It carries out the reaction S-adenosyl-L-homocysteine + H2O + H(+) = S-inosyl-L-homocysteine + NH4(+). The catalysed reaction is S-methyl-5'-thioadenosine + H2O + H(+) = S-methyl-5'-thioinosine + NH4(+). The enzyme catalyses adenosine + H2O + H(+) = inosine + NH4(+). It functions in the pathway amino-acid biosynthesis; S-adenosyl-L-methionine biosynthesis. Its function is as follows. Catalyzes the deamination of three SAM-derived enzymatic products, namely 5'-deoxyadenosine, S-adenosyl-L-homocysteine, and 5'-methylthioadenosine, to produce the inosine analogs. Can also deaminate adenosine. The preferred substrate for this enzyme is 5'-deoxyadenosine, but all these substrates are efficiently deaminated. Likely functions in a S-adenosyl-L-methionine (SAM) recycling pathway from S-adenosyl-L-homocysteine (SAH) produced from SAM-dependent methylation reactions. May also be involved in the recycling of 5'-deoxyadenosine, whereupon the 5'-deoxyribose moiety of 5'-deoxyinosine is further metabolized to deoxyhexoses used for the biosynthesis of aromatic amino acids in methanogens. This Methanococcus maripaludis (strain C5 / ATCC BAA-1333) protein is 5'-deoxyadenosine deaminase.